Reading from the N-terminus, the 75-residue chain is MGSFSIWHWLIVLVIVALVFGTKKLRNIGSDLGGAVKGFKEGMKDANSDKPAEQVTQQKVADDTIDVQAKEKTNS.

The helical transmembrane segment at 1–21 threads the bilayer; sequence MGSFSIWHWLIVLVIVALVFG. Positions 44–75 are disordered; it reads KDANSDKPAEQVTQQKVADDTIDVQAKEKTNS.

Belongs to the TatA/E family. In terms of assembly, the Tat system comprises two distinct complexes: a TatABC complex, containing multiple copies of TatA, TatB and TatC subunits, and a separate TatA complex, containing only TatA subunits. Substrates initially bind to the TatABC complex, which probably triggers association of the separate TatA complex to form the active translocon.

The protein localises to the cell inner membrane. In terms of biological role, part of the twin-arginine translocation (Tat) system that transports large folded proteins containing a characteristic twin-arginine motif in their signal peptide across membranes. TatA could form the protein-conducting channel of the Tat system. In Bordetella petrii (strain ATCC BAA-461 / DSM 12804 / CCUG 43448), this protein is Sec-independent protein translocase protein TatA.